The following is a 264-amino-acid chain: Thymidylate synthase (264 aa).

DUMP is bound at residue arginine 21. Histidine 51 provides a ligand contact to (6R)-5,10-methylene-5,6,7,8-tetrahydrofolate. Cysteine 146 (nucleophile) is an active-site residue. DUMP is bound by residues 166–169 (RSAD), asparagine 177, and 207–209 (HIY). Aspartate 169 is a (6R)-5,10-methylene-5,6,7,8-tetrahydrofolate binding site. Alanine 263 serves as a coordination point for (6R)-5,10-methylene-5,6,7,8-tetrahydrofolate.

The protein belongs to the thymidylate synthase family. Bacterial-type ThyA subfamily. Homodimer.

It localises to the cytoplasm. It carries out the reaction dUMP + (6R)-5,10-methylene-5,6,7,8-tetrahydrofolate = 7,8-dihydrofolate + dTMP. Its pathway is pyrimidine metabolism; dTTP biosynthesis. In terms of biological role, catalyzes the reductive methylation of 2'-deoxyuridine-5'-monophosphate (dUMP) to 2'-deoxythymidine-5'-monophosphate (dTMP) while utilizing 5,10-methylenetetrahydrofolate (mTHF) as the methyl donor and reductant in the reaction, yielding dihydrofolate (DHF) as a by-product. This enzymatic reaction provides an intracellular de novo source of dTMP, an essential precursor for DNA biosynthesis. The polypeptide is Thymidylate synthase (Brucella canis (strain ATCC 23365 / NCTC 10854 / RM-666)).